Here is a 233-residue protein sequence, read N- to C-terminus: Protein lin-7 homolog A (233 aa).

Positions 14-28 (MATLTVVQPLTLDRD) match the Kinase interacting site motif. The L27 domain maps to 25 to 80 (LDRDVARAIELLEKLQESGEVPVHKLQSLKKVLQSEFCTAIREVYQYMHETITVNG). The region spanning 108 to 190 (VVELPKTDEG…SVKLVVRYTP (83 aa)) is the PDZ domain. The disordered stretch occupies residues 214 to 233 (LLIQQQQQQQQQQPQQNHMS).

The protein belongs to the lin-7 family. As to quaternary structure, forms a complex with CASK and CASKIN1. Component of the brain-specific heterotrimeric complex (LIN-10-LIN-2-LIN-7 complex) composed of at least APBA1, CASK, and LIN7, which associates with the motor protein KIF17 to transport vesicles along microtubules. Can also interact with other modular proteins containing protein-protein interaction domains like PALS1, PALS2, MPP7, DLG1, DLG2 and DLG3 through its L27 domain. Interacts with DLG4, GRIN2B and MARCHF11 as well as CDH1 and CTNNB1, the channels KCNJ12/Kir2.2, KCNJ4/Kir2.3 and probably KCNJ2/Kir2.1 and SLC6A12/BGT-1 via its PDZ domain. The association of LIN7A with cadherin and beta-catenin is calcium-dependent, occurs at synaptic junctions and requires the actin cytoskeleton. Interacts with EGFR, ERBB2, ERBB3 and ERBB4 with both PDZ and KID domains. Associates with KIF17 via APBA1. Interacts with HTR4. Forms a tripartite complex composed of DLG1, MPP7 and LIN7 (LIN7A or LIN7C). As to expression, expressed in the kidney, along the length of the nephron.

The protein localises to the cell membrane. It localises to the basolateral cell membrane. Its subcellular location is the cell junction. It is found in the postsynaptic density membrane. The protein resides in the tight junction. Its function is as follows. Plays a role in establishing and maintaining the asymmetric distribution of channels and receptors at the plasma membrane of polarized cells. Forms membrane-associated multiprotein complexes that may regulate delivery and recycling of proteins to the correct membrane domains. The tripartite complex composed of LIN7 (LIN7A, LIN7B or LIN7C), CASK and APBA1 associates with the motor protein KIF17 to transport vesicles containing N-methyl-D-aspartate (NMDA) receptor subunit NR2B along microtubules. This complex may have the potential to couple synaptic vesicle exocytosis to cell adhesion in brain. Ensures the proper localization of GRIN2B (subunit 2B of the NMDA receptor) to neuronal postsynaptic density and may function in localizing synaptic vesicles at synapses where it is recruited by beta-catenin and cadherin. Required to localize Kir2 channels, GABA transporter (SLC6A12) and EGFR/ERBB1, ERBB2, ERBB3 and ERBB4 to the basolateral membrane of epithelial cells. The chain is Protein lin-7 homolog A (Lin7a) from Mus musculus (Mouse).